Here is a 124-residue protein sequence, read N- to C-terminus: Small ribosomal subunit protein uS12 (124 aa).

Asp89 carries the post-translational modification 3-methylthioaspartic acid.

Belongs to the universal ribosomal protein uS12 family. Part of the 30S ribosomal subunit. Contacts proteins S8 and S17. May interact with IF1 in the 30S initiation complex.

Its function is as follows. With S4 and S5 plays an important role in translational accuracy. In terms of biological role, interacts with and stabilizes bases of the 16S rRNA that are involved in tRNA selection in the A site and with the mRNA backbone. Located at the interface of the 30S and 50S subunits, it traverses the body of the 30S subunit contacting proteins on the other side and probably holding the rRNA structure together. The combined cluster of proteins S8, S12 and S17 appears to hold together the shoulder and platform of the 30S subunit. This chain is Small ribosomal subunit protein uS12, found in Pectobacterium atrosepticum (strain SCRI 1043 / ATCC BAA-672) (Erwinia carotovora subsp. atroseptica).